The chain runs to 878 residues: NUT family member 2A (878 aa).

4 disordered regions span residues 273-324 (WSQG…DDSC), 417-566 (QKSQ…LSYT), 627-757 (KEKQ…EEEE), and 775-878 (WLPQ…RCSQ). 2 stretches are compositionally biased toward pro residues: residues 278–288 (PLPPPPPPAAQ) and 427–444 (CLPPPATPRLEPRGPPAP). The segment covering 476 to 487 (TKARRPPPRPHR) has biased composition (basic residues). Residues 537–551 (EPEKQREEGEVKQPQ) show a composition bias toward basic and acidic residues.

This sequence belongs to the NUT family.

This Homo sapiens (Human) protein is NUT family member 2A (NUTM2A).